Reading from the N-terminus, the 78-residue chain is Large ribosomal subunit protein bL28 (78 aa).

The tract at residues 1–20 is disordered; that stretch reads MSRVCQVTGKGPVTGNNISH.

This sequence belongs to the bacterial ribosomal protein bL28 family.

The protein is Large ribosomal subunit protein bL28 of Pseudomonas putida (strain W619).